Consider the following 183-residue polypeptide: MQQWVDCEFTGRDFRDEDLSRLHTERAMFSECDFSGVNLAESQHRGSAFRNCTFERTTLWHSTFAQCSMLGSVFVACRLRPLTLDDVDFTLAVLGGNDLRGLNLTGCRLRETSLVDTDLRKCVLRGADLSGARTTGARLDDADLRGATVDPVLWRTASLVGARVDVDQAVAFAAAHGLCLAGG.

The region spanning 113–147 (SLVDTDLRKCVLRGADLSGARTTGARLDDADLRGA) is the Pentapeptide repeat domain.

It belongs to the pentapeptide repeat protein family. Homodimer. Probably interacts with DNA gyrase.

Functionally, might be involved in fluoroquinolone resistance. Inhibits ATP-independent DNA relaxation, ATP-dependent DNA supercoiling and ATP-dependent decatenation by endogenous gyrase, 50% inhibition occurs at 2 uM; inhibition is abolished if GyrA is mutated (Asp-87 to Gly or His). Also inhibits fluoroquinolone-promoted dsDNA cleavage. Increases fluoroquinolone (ciprofloxacin or moxifloxacin) inhibition of gyrase supercoiling activity in a concentration-dependent manner. Inhibits DNA relaxation and supercoiling by E.coli gyrase. Forms a structure that exhibits size, shape and electrostatic similarity to B-form DNA; it may bind to DNA gyrase which is postulated to protect it from fluoroquinolones. The chain is Pentapeptide repeat protein MfpA from Mycobacterium tuberculosis (strain ATCC 25618 / H37Rv).